The primary structure comprises 240 residues: Lactate utilization protein C (240 aa).

Belongs to the LutC/YkgG family.

Functionally, is involved in L-lactate degradation and allows cells to grow with lactate as the sole carbon source. This is Lactate utilization protein C from Bacillus pumilus (strain SAFR-032).